Reading from the N-terminus, the 138-residue chain is UPF0047 protein MJ1081 (138 aa).

It belongs to the UPF0047 family.

This is UPF0047 protein MJ1081 from Methanocaldococcus jannaschii (strain ATCC 43067 / DSM 2661 / JAL-1 / JCM 10045 / NBRC 100440) (Methanococcus jannaschii).